A 512-amino-acid chain; its full sequence is PTS system mannitol-specific EIICB component (512 aa).

Residues 1–28 lie on the Cytoplasmic side of the membrane; that stretch reads MSQTEEKKGIGRRVQAFGSFLSSMIMPN. The 333-residue stretch at 17–349 folds into the PTS EIIC type-2 domain; the sequence is FGSFLSSMIM…MKFTKEPKQD (333 aa). The chain crosses the membrane as a helical span at residues 29–50; sequence IGAFIAWGFIAAIFIDNGWFPN. Residues 51–54 are Extracellular-facing; that stretch reads KDLA. The helical transmembrane segment at 55–75 threads the bilayer; it reads TLAGPMITYLIPLLIAFSGGR. The Cytoplasmic portion of the chain corresponds to 76-139; sequence LIYDLRGGII…QGFEMLFNNF (64 aa). A helical membrane pass occupies residues 140–161; the sequence is SAGILGFIMTIAGFKILAPLMK. Over 162 to 170 the chain is Extracellular; sequence FIMHILSVA. The helical transmembrane segment at 171 to 191 threads the bilayer; it reads VEALVHAHLLPLVSILVEPAK. Residues 192–278 are Cytoplasmic-facing; that stretch reads IVFLNNAINH…VLMRPLLFIA (87 aa). Residues 279–298 traverse the membrane as a helical segment; sequence VILGGMTGVATYQATGFGFK. At 299-318 the chain is on the extracellular side; it reads SPASPGSFIVYCLNAPRGEF. Residues 319–340 form a helical membrane-spanning segment; sequence LHMLLGVFLATLVSFVVAALIM. At 341–512 the chain is on the cytoplasmic side; the sequence is KFTKEPKQDL…LNNLKKDDQA (172 aa). Positions 365 to 376 are enriched in low complexity; the sequence is SSVASKLVSSDK. Residues 365-401 form a disordered region; that stretch reads SSVASKLVSSDKNVNTEENASGNVSETSSLDDDPEAL. Polar residues predominate over residues 380–392; sequence TEENASGNVSETS. A PTS EIIB type-2 domain is found at 419–512; the sequence is NHVIFACDAG…LNNLKKDDQA (94 aa). Cysteine 425 (phosphocysteine intermediate; for EIIB activity) is an active-site residue. Cysteine 425 bears the Phosphocysteine; by EIIA mark.

Homodimer.

The protein localises to the cell membrane. It carries out the reaction D-mannitol(out) + N(pros)-phospho-L-histidyl-[protein] = D-mannitol 1-phosphate(in) + L-histidyl-[protein]. In terms of biological role, the phosphoenolpyruvate-dependent sugar phosphotransferase system (sugar PTS), a major carbohydrate active transport system, catalyzes the phosphorylation of incoming sugar substrates concomitantly with their translocation across the cell membrane. The enzyme II CmtAB PTS system is involved in D-mannitol transport. The chain is PTS system mannitol-specific EIICB component (mtlA) from Staphylococcus aureus (strain MRSA252).